Consider the following 462-residue polypeptide: Argininosuccinate lyase (462 aa).

Belongs to the lyase 1 family. Argininosuccinate lyase subfamily.

It localises to the cytoplasm. The catalysed reaction is 2-(N(omega)-L-arginino)succinate = fumarate + L-arginine. Its pathway is amino-acid biosynthesis; L-arginine biosynthesis; L-arginine from L-ornithine and carbamoyl phosphate: step 3/3. This is Argininosuccinate lyase from Bacillus cereus (strain B4264).